The primary structure comprises 679 residues: MTKNLLLELGLEELPAYVVTKSEMQLGEKVASFLKENRLSFESIQTFSTPRRLAVRVIGLAEKQEDLIEDFKGPSKKIALDENGEFSKAAQGFVRGKGLTTDAIEFRTIKGEEYVYVTKHENGKDAEEVLKDIPSVLSSLTFPVSMHWANHTFEYIRPVHTLTVLLDDNALDLDFLDIHSGQKSRGHRFLGKEVTIENANSYESDLKTVFVIVDPKERQQMILDQIKAIEIAENVAVDIDEDLLNEVLNLVEYPTAFMGTFDQKYLDVPEEVLVTSMKNHQRYFVVRDKNGHLLPNFISVRNGNSEYIENVIKGNEKVLVARLEDGEFFWKEDQKLNIEDLVAKLANVTFHEKIGSLSEHMARTKVIASHLAEKVGLSDQERQALDRASQIYKFDLLTGMVGEFDELQGIMGEKYALLAGESAMVATAIREHYLPNSAEGALPESKVGALLALADKLDTLLSFFSVDLIPSGSNDPYALRRATQGIVRILEAFGWNIPMDALVENCYQLPFESLTYTNKDQVMSFISARVDKMMGKAIPKDIRDAVLASTNYQVPQMLETAQALVSASQSQGYKTAVENLSRVFNLAEKAEQEPQINSDLFENDEEIALYKAIENLNLEGNAKEKVEQLFALNDVIVNFFDHTMVMVEDVNVKNNRLALLSSLVSKAQTLAQFNLLNSK.

The protein belongs to the class-II aminoacyl-tRNA synthetase family. As to quaternary structure, tetramer of two alpha and two beta subunits.

It localises to the cytoplasm. The enzyme catalyses tRNA(Gly) + glycine + ATP = glycyl-tRNA(Gly) + AMP + diphosphate. The polypeptide is Glycine--tRNA ligase beta subunit (Streptococcus uberis (strain ATCC BAA-854 / 0140J)).